Here is a 121-residue protein sequence, read N- to C-terminus: Putative SNURF-like protein (121 aa).

It belongs to the SNURF family.

This is Putative SNURF-like protein (SNURFL) from Homo sapiens (Human).